The sequence spans 206 residues: N-(5'-phosphoribosyl)anthranilate isomerase (206 aa).

Belongs to the TrpF family.

The enzyme catalyses N-(5-phospho-beta-D-ribosyl)anthranilate = 1-(2-carboxyphenylamino)-1-deoxy-D-ribulose 5-phosphate. The protein operates within amino-acid biosynthesis; L-tryptophan biosynthesis; L-tryptophan from chorismate: step 3/5. In Nitrosococcus oceani (strain ATCC 19707 / BCRC 17464 / JCM 30415 / NCIMB 11848 / C-107), this protein is N-(5'-phosphoribosyl)anthranilate isomerase.